We begin with the raw amino-acid sequence, 144 residues long: Transcriptional regulator SlyA (144 aa).

Residues 2 to 135 (ESPLGSDLAR…LNKIISKLEK (134 aa)) enclose the HTH marR-type domain. The segment at residues 49–72 (QIQLAKAIGIEQPSLVRTLDQLEE) is a DNA-binding region (H-T-H motif).

It belongs to the SlyA family. As to quaternary structure, homodimer.

Transcription regulator that can specifically activate or repress expression of target genes. The chain is Transcriptional regulator SlyA from Blochmanniella pennsylvanica (strain BPEN).